The chain runs to 565 residues: E3 ubiquitin-protein ligase ipaH7.8 (565 aa).

A disordered region spans residues 1–22; sequence MFSVNNTHSSVSCSPSINSNST. Residues 1 to 262 form an interaction with target proteins region; it reads MFSVNNTHSS…YHGPQIYFSM (262 aa). Residues 9–22 are compositionally biased toward low complexity; it reads SSVSCSPSINSNST. LRR repeat units follow at residues 58–79, 80–97, 98–119, 120–137, 138–157, 158–179, 180–199, 202–223, and 225–248; these read QEAV…PKHI, SALI…KLPA, FLKE…PESL, TTLS…VLPN, HLTS…ALPE, KLKF…PDKL, EILC…SDRN, RQKE…FSQL, and SSYR…QRLT. The interval 263–270 is linker; the sequence is SDGQQNTL. The E3 ubiquitin-protein ligase catalytic domain stretch occupies residues 271–565; it reads HRPLADAVTA…SENGSRLHHS (295 aa). Residues 273 to 565 form the NEL domain; that stretch reads PLADAVTAWF…SENGSRLHHS (293 aa). Cys-357 functions as the Glycyl thioester intermediate in the catalytic mechanism.

The protein belongs to the LRR-containing bacterial E3 ligase family. Ubiquitinated in the presence of host E1 ubiquitin-activating enzyme, E2 ubiquitin-conjugating enzyme and ubiquitin.

It localises to the secreted. It is found in the host cytoplasm. It carries out the reaction S-ubiquitinyl-[E2 ubiquitin-conjugating enzyme]-L-cysteine + [acceptor protein]-L-lysine = [E2 ubiquitin-conjugating enzyme]-L-cysteine + N(6)-ubiquitinyl-[acceptor protein]-L-lysine.. It functions in the pathway protein modification; protein ubiquitination. Its function is as follows. E3 ubiquitin ligase effector protein that interferes with host's innate immunity. Functions to alter host cell physiology and promote bacterial survival in host tissues. Catalyzes ubiquitination of human gasdermins GSDMB and GSDMD, promoting their degradation by the proteasome, thereby preventing cell death. In contrast, activates host cell pyroptosis in mouse cells: catalyzes ubiquitination of mouse Nlrp1b allele 1 protein, releasing the cleaved C-terminal part of Nlrp1b, which polymerizes and forms the Nlrp1b inflammasome followed by host cell pyroptosis. Does not catalyze ubiquitination of mouse GSDMD. This is E3 ubiquitin-protein ligase ipaH7.8 from Shigella flexneri.